Consider the following 598-residue polypeptide: Chaperone protein DnaK (598 aa).

Phosphothreonine; by autocatalysis is present on T175. The span at 571–591 (AKSAAASSNKDDSLNNNSSSN) shows a compositional bias: low complexity. Residues 571–598 (AKSAAASSNKDDSLNNNSSSNNDEETFE) form a disordered region.

The protein belongs to the heat shock protein 70 family.

In terms of biological role, acts as a chaperone. This chain is Chaperone protein DnaK, found in Mycoplasmopsis agalactiae (strain NCTC 10123 / CIP 59.7 / PG2) (Mycoplasma agalactiae).